The following is a 353-amino-acid chain: Photosystem II protein D1 (353 aa).

N-acetylthreonine is present on Thr2. A Phosphothreonine modification is found at Thr2. 3 helical membrane passes run 29 to 46 (YIGW…TATS), 118 to 133 (HFLL…EWEL), and 142 to 156 (WIAV…AATA). Chlorophyll a is bound at residue His118. Tyr126 serves as a coordination point for pheophytin a. 2 residues coordinate [CaMn4O5] cluster: Asp170 and Glu189. A helical transmembrane segment spans residues 197–218 (FHMLGVAGVFGGSLFSAMHGSL). Residue His198 participates in chlorophyll a binding. Residues His215 and 264-265 (SF) each bind a quinone. His215 provides a ligand contact to Fe cation. His272 is a binding site for Fe cation. A helical transmembrane segment spans residues 274–288 (FLAAWPVVGIWFTAL). [CaMn4O5] cluster contacts are provided by His332, Glu333, Asp342, and Ala344. Residues 345 to 353 (AVEAPSING) constitute a propeptide that is removed on maturation.

This sequence belongs to the reaction center PufL/M/PsbA/D family. In terms of assembly, PSII is composed of 1 copy each of membrane proteins PsbA, PsbB, PsbC, PsbD, PsbE, PsbF, PsbH, PsbI, PsbJ, PsbK, PsbL, PsbM, PsbT, PsbX, PsbY, PsbZ, Psb30/Ycf12, at least 3 peripheral proteins of the oxygen-evolving complex and a large number of cofactors. It forms dimeric complexes. The cofactor is The D1/D2 heterodimer binds P680, chlorophylls that are the primary electron donor of PSII, and subsequent electron acceptors. It shares a non-heme iron and each subunit binds pheophytin, quinone, additional chlorophylls, carotenoids and lipids. D1 provides most of the ligands for the Mn4-Ca-O5 cluster of the oxygen-evolving complex (OEC). There is also a Cl(-1) ion associated with D1 and D2, which is required for oxygen evolution. The PSII complex binds additional chlorophylls, carotenoids and specific lipids.. Tyr-161 forms a radical intermediate that is referred to as redox-active TyrZ, YZ or Y-Z. In terms of processing, C-terminally processed by CTPA; processing is essential to allow assembly of the oxygen-evolving complex and thus photosynthetic growth.

The protein localises to the plastid. The protein resides in the chloroplast thylakoid membrane. The enzyme catalyses 2 a plastoquinone + 4 hnu + 2 H2O = 2 a plastoquinol + O2. In terms of biological role, photosystem II (PSII) is a light-driven water:plastoquinone oxidoreductase that uses light energy to abstract electrons from H(2)O, generating O(2) and a proton gradient subsequently used for ATP formation. It consists of a core antenna complex that captures photons, and an electron transfer chain that converts photonic excitation into a charge separation. The D1/D2 (PsbA/PsbD) reaction center heterodimer binds P680, the primary electron donor of PSII as well as several subsequent electron acceptors. The sequence is that of Photosystem II protein D1 from Lotus japonicus (Lotus corniculatus var. japonicus).